The chain runs to 77 residues: Translational regulator CsrA (77 aa).

The protein belongs to the CsrA/RsmA family. As to quaternary structure, homodimer; the beta-strands of each monomer intercalate to form a hydrophobic core, while the alpha-helices form wings that extend away from the core.

Its subcellular location is the cytoplasm. Functionally, a translational regulator that binds mRNA to regulate translation initiation and/or mRNA stability. Usually binds in the 5'-UTR at or near the Shine-Dalgarno sequence preventing ribosome-binding, thus repressing translation. Its main target seems to be the major flagellin gene, while its function is anatagonized by FliW. In Desulfitobacterium hafniense (strain DSM 10664 / DCB-2), this protein is Translational regulator CsrA.